Reading from the N-terminus, the 195-residue chain is Large ribosomal subunit protein bL17 (195 aa).

Residues 125 to 195 (ANRARRVGAS…PTQDSDADKS (71 aa)) form a disordered region. A compositionally biased stretch (low complexity) spans 136–152 (QTAPVAAAAAPQAAVEP). Acidic residues-rich tracts occupy residues 153 to 173 (EATE…EDTT) and 183 to 195 (TDDP…ADKS).

Belongs to the bacterial ribosomal protein bL17 family. As to quaternary structure, part of the 50S ribosomal subunit. Contacts protein L32.

The polypeptide is Large ribosomal subunit protein bL17 (Mycobacterium sp. (strain JLS)).